We begin with the raw amino-acid sequence, 243 residues long: Peptidyl-tRNA hydrolase (243 aa).

Residue tyrosine 14 coordinates tRNA. Histidine 19 (proton acceptor) is an active-site residue. TRNA-binding residues include phenylalanine 64, asparagine 66, and asparagine 112. The tract at residues 188-243 (GGKAEEEKPRKDNKTTEKKPAGQSHIHQARNHNQPKVLTTGPMADILKKMFGNKGE) is disordered. Residues 190–207 (KAEEEKPRKDNKTTEKKP) are compositionally biased toward basic and acidic residues.

This sequence belongs to the PTH family. As to quaternary structure, monomer.

The protein localises to the cytoplasm. The catalysed reaction is an N-acyl-L-alpha-aminoacyl-tRNA + H2O = an N-acyl-L-amino acid + a tRNA + H(+). Hydrolyzes ribosome-free peptidyl-tRNAs (with 1 or more amino acids incorporated), which drop off the ribosome during protein synthesis, or as a result of ribosome stalling. In terms of biological role, catalyzes the release of premature peptidyl moieties from peptidyl-tRNA molecules trapped in stalled 50S ribosomal subunits, and thus maintains levels of free tRNAs and 50S ribosomes. This Rhizobium leguminosarum bv. trifolii (strain WSM2304) protein is Peptidyl-tRNA hydrolase.